A 79-amino-acid chain; its full sequence is Small ribosomal subunit protein bS18 (79 aa).

This sequence belongs to the bacterial ribosomal protein bS18 family. As to quaternary structure, part of the 30S ribosomal subunit. Forms a tight heterodimer with protein bS6.

In terms of biological role, binds as a heterodimer with protein bS6 to the central domain of the 16S rRNA, where it helps stabilize the platform of the 30S subunit. This chain is Small ribosomal subunit protein bS18, found in Streptococcus pyogenes serotype M5 (strain Manfredo).